A 497-amino-acid polypeptide reads, in one-letter code: Cytochrome P450 monooxygenase opdB (497 aa).

A helical transmembrane segment spans residues 26–46 (YLGAMAGSVILLISAFTLSLG). A disordered region spans residues 69–90 (MSKFTRSRELSQQGEDAAGTEP). Residue Cys454 participates in heme binding.

Heme serves as cofactor.

It is found in the membrane. It participates in secondary metabolite biosynthesis. Its function is as follows. Cytochrome P450 monooxygenase; part of the gene cluster that mediates the biosynthesis of oxopyrrolidines, polyketide-amino acid hybrid compounds with feature structures of tetramic acid. Does not seem to play a role in oxopyrrolidines A and B biosynthesis. May be involved in further modifications of these oxopyrrolidines. The chain is Cytochrome P450 monooxygenase opdB from Penicillium oxalicum (strain 114-2 / CGMCC 5302) (Penicillium decumbens).